The primary structure comprises 397 residues: Succinate--CoA ligase [ADP-forming] subunit beta (397 aa).

The ATP-grasp domain maps to 9–254 (KALLKSFGAP…TTEEDEKEIE (246 aa)). ATP-binding positions include K46, 53 to 55 (GRG), E109, A112, and E117. The Mg(2+) site is built by N209 and D223. Residues N274 and 331–333 (GIM) contribute to the substrate site.

It belongs to the succinate/malate CoA ligase beta subunit family. In terms of assembly, heterotetramer of two alpha and two beta subunits. The cofactor is Mg(2+).

The enzyme catalyses succinate + ATP + CoA = succinyl-CoA + ADP + phosphate. It catalyses the reaction GTP + succinate + CoA = succinyl-CoA + GDP + phosphate. The protein operates within carbohydrate metabolism; tricarboxylic acid cycle; succinate from succinyl-CoA (ligase route): step 1/1. Its function is as follows. Succinyl-CoA synthetase functions in the citric acid cycle (TCA), coupling the hydrolysis of succinyl-CoA to the synthesis of either ATP or GTP and thus represents the only step of substrate-level phosphorylation in the TCA. The beta subunit provides nucleotide specificity of the enzyme and binds the substrate succinate, while the binding sites for coenzyme A and phosphate are found in the alpha subunit. The chain is Succinate--CoA ligase [ADP-forming] subunit beta from Mesorhizobium japonicum (strain LMG 29417 / CECT 9101 / MAFF 303099) (Mesorhizobium loti (strain MAFF 303099)).